Reading from the N-terminus, the 367-residue chain is Pectate lyase 1 (367 aa).

The signal sequence occupies residues 1-21; that stretch reads MASPCLVAVLVFLCAIVSCYS. Cystine bridges form between Cys-28–Cys-45 and Cys-128–Cys-147. The N-linked (GlcNAc...) asparagine glycan is linked to Asn-148. Ca(2+) is bound at residue Asp-170. The N-linked (GlcNAc...) asparagine glycan is linked to Asn-178. Ca(2+)-binding residues include Asp-194 and Asp-198. Arg-250 is an active-site residue. An N-linked (GlcNAc...) asparagine glycan is attached at Asn-293. Cys-306 and Cys-312 are oxidised to a cystine.

This sequence belongs to the polysaccharide lyase 1 family. Amb a subfamily. Ca(2+) serves as cofactor.

The enzyme catalyses Eliminative cleavage of (1-&gt;4)-alpha-D-galacturonan to give oligosaccharides with 4-deoxy-alpha-D-galact-4-enuronosyl groups at their non-reducing ends.. It functions in the pathway glycan metabolism; pectin degradation; 2-dehydro-3-deoxy-D-gluconate from pectin: step 2/5. Its function is as follows. Has pectate lyase activity. The polypeptide is Pectate lyase 1 (Hesperocyparis arizonica (Arizona cypress)).